A 364-amino-acid polypeptide reads, in one-letter code: MIKRIIVNVKTGSYPIIIGYGLLNKDFMSYWTIKNGDLVVIITNDRVAPIYLNRLYNSFNACEIVTDQCILPDGEQNKSLSMLNKILTQLLSKNYDRDTILVALGGGVIGDLTGFAASVYQRGIRFIQVPTTLLAQVDASIGGKTGVNHVFGKNMIGSFHQPISVMVDLDCLCTLSEKEFRSGLSEIIKYAVALDSAFFNWLENNLDYLLMLNPQSLMYCVYRCCELKRSIVIMDEFDQGIRSVLNLGHTYGHAIESYLGYSQWSHGEAIAAGLMMAVSTALHIGGLISFHDAIRIKLLLKRANLPICGPEEMKPQDYIKYMIRDKKSRLGRINLVLPKSIGKTQVFVNVNTDVILNAIENIDI.

Residues 73-78 (DGEQNK), 107-111 (GVIGD), 131-132 (TT), Lys-144, Lys-153, and 171-174 (CLCT) contribute to the NAD(+) site. Positions 186, 249, and 266 each coordinate Zn(2+).

The protein belongs to the sugar phosphate cyclases superfamily. Dehydroquinate synthase family. Requires NAD(+) as cofactor. Co(2+) serves as cofactor. It depends on Zn(2+) as a cofactor.

It localises to the cytoplasm. The catalysed reaction is 7-phospho-2-dehydro-3-deoxy-D-arabino-heptonate = 3-dehydroquinate + phosphate. The protein operates within metabolic intermediate biosynthesis; chorismate biosynthesis; chorismate from D-erythrose 4-phosphate and phosphoenolpyruvate: step 2/7. In terms of biological role, catalyzes the conversion of 3-deoxy-D-arabino-heptulosonate 7-phosphate (DAHP) to dehydroquinate (DHQ). The chain is 3-dehydroquinate synthase from Blochmanniella floridana.